A 369-amino-acid chain; its full sequence is Phospho-N-acetylmuramoyl-pentapeptide-transferase (369 aa).

10 helical membrane passes run 2-22 (IALL…TPLF), 55-75 (TVVV…MFLM), 86-106 (ALIL…DDFI), 120-140 (AKLI…LNFP), 163-183 (LAFG…NLIV), 196-216 (LDGL…LMGI), 239-259 (PLDL…FLWW), 266-286 (IFMG…FAIL), 291-311 (LLLG…IIQV), and 348-368 (ILGG…WVVL).

The protein belongs to the glycosyltransferase 4 family. MraY subfamily. Requires Mg(2+) as cofactor.

It is found in the cell membrane. The catalysed reaction is UDP-N-acetyl-alpha-D-muramoyl-L-alanyl-gamma-D-glutamyl-meso-2,6-diaminopimeloyl-D-alanyl-D-alanine + di-trans,octa-cis-undecaprenyl phosphate = di-trans,octa-cis-undecaprenyl diphospho-N-acetyl-alpha-D-muramoyl-L-alanyl-D-glutamyl-meso-2,6-diaminopimeloyl-D-alanyl-D-alanine + UMP. It participates in cell wall biogenesis; peptidoglycan biosynthesis. Catalyzes the initial step of the lipid cycle reactions in the biosynthesis of the cell wall peptidoglycan: transfers peptidoglycan precursor phospho-MurNAc-pentapeptide from UDP-MurNAc-pentapeptide onto the lipid carrier undecaprenyl phosphate, yielding undecaprenyl-pyrophosphoryl-MurNAc-pentapeptide, known as lipid I. The polypeptide is Phospho-N-acetylmuramoyl-pentapeptide-transferase (Pseudarthrobacter chlorophenolicus (strain ATCC 700700 / DSM 12829 / CIP 107037 / JCM 12360 / KCTC 9906 / NCIMB 13794 / A6) (Arthrobacter chlorophenolicus)).